The following is a 333-amino-acid chain: Foldase protein PrsA (333 aa).

The first 22 residues, 1–22, serve as a signal peptide directing secretion; it reads MKKSTKLLAGIVTLASAMTLAA. A lipid anchor (N-palmitoyl cysteine) is attached at Cys-23. Cys-23 is lipidated: S-diacylglycerol cysteine. A PpiC domain is found at 145 to 240; sequence TPEMTTQVIT…NKFYIVKVTK (96 aa). Residues 301 to 333 are disordered; sequence DKKASKANTSKSDQKTSSDSSKDSQSSKSKSEK. Positions 312–322 are enriched in basic and acidic residues; the sequence is SDQKTSSDSSK. The span at 323 to 333 shows a compositional bias: low complexity; that stretch reads DSQSSKSKSEK.

The protein belongs to the PrsA family.

Its subcellular location is the cell membrane. It carries out the reaction [protein]-peptidylproline (omega=180) = [protein]-peptidylproline (omega=0). In terms of biological role, plays a major role in protein secretion by helping the post-translocational extracellular folding of several secreted proteins. In Streptococcus equi subsp. zooepidemicus (strain H70), this protein is Foldase protein PrsA.